The sequence spans 142 residues: Secreted acidic protein 1B (142 aa).

Composition is skewed to acidic residues over residues 1–47 (SDDE…DDNE) and 54–64 (TNDDVDYGDGN). Residues 1 to 74 (SDDESGDDEN…DEAREIGDHS (74 aa)) form a disordered region. At 1–123 (SDDESGDDEN…YLRSGGSHFK (123 aa)) the chain is on the extracellular side. Residues 65–74 (DEAREIGDHS) are compositionally biased toward basic and acidic residues. The helical transmembrane segment at 124–141 (GQLLNITLGLGFCILFLL) threads the bilayer. A topological domain (cytoplasmic) is located at residue Leu142.

In terms of tissue distribution, component of the acid-insoluble and acid-soluble organic matrix of the aragonitic skeleton (at protein level).

The protein resides in the membrane. The sequence is that of Secreted acidic protein 1B from Acropora millepora (Staghorn coral).